A 276-amino-acid chain; its full sequence is MNVFISVVLFLGSARAASKTGDDEWVHLPNKCEVCKFVSIEMKSAFDETGKTKEVIDTNYRFLDDKGAPPIKYVKSDIRFIEVTENVCSRIMQYNLHKERDGSNRFAKGMSETFSTLHNLVNKGVKVVMDIPYELWNETSAEVADLKKQCDVMVEQYEDVIEDWYKGSQEEDLTTYLCEKHVLKGQDTGCLKETWAGKKGDMAAIAEDKKKKKGKKKKGKDGEDGQKKEKKVKKKKKKSKISDSESSKRRMEAAGFTSDEEEIQKKVPLNQPKTEL.

The N-terminal stretch at 1–16 (MNVFISVVLFLGSARA) is a signal peptide. One can recognise a Saposin B-type domain in the interval 30–269 (NKCEVCKFVS…EEEIQKKVPL (240 aa)). 3 cysteine pairs are disulfide-bonded: C32–C190, C35–C178, and C88–C150. Positions 137–162 (NETSAEVADLKKQCDVMVEQYEDVIE) form a coiled coil. The tract at residues 206 to 276 (AEDKKKKKGK…VPLNQPKTEL (71 aa)) is disordered. 2 stretches are compositionally biased toward basic residues: residues 210 to 219 (KKKKGKKKKG) and 228 to 239 (KEKKVKKKKKKS). Basic and acidic residues predominate over residues 240 to 252 (KISDSESSKRRME).

Belongs to the canopy family.

The protein localises to the endoplasmic reticulum. In terms of biological role, toll-like receptor (TLR)-specific co-chaperone for HSP90B1. Required for proper TLR folding and hence controls TLR exit from the endoplasmic reticulum. Consequently, required for immune responses. This chain is Protein canopy homolog 3 (cnpy3), found in Danio rerio (Zebrafish).